The sequence spans 1004 residues: Glutamate [NMDA] receptor subunit 1 (1004 aa).

Positions 1–39 are cleaved as a signal peptide; the sequence is MAGTDSPAAARFVYRCLLFAPAIVVGLLLPLTLPPIAAA. The Extracellular portion of the chain corresponds to 40 to 585; it reads QRHTASDNPS…TLVSFLQPFS (546 aa). 7 N-linked (GlcNAc...) asparagine glycosylation sites follow: Asn-270, Asn-326, Asn-357, Asn-409, Asn-466, Asn-493, and Asn-513. Residues 542 to 544 and Arg-549 contribute to the glycine site; that span reads PLT. Residues 586 to 606 traverse the membrane as a helical segment; sequence NTLWILVMVSVHVVALVLYLL. Over 607 to 663 the chain is Cytoplasmic; the sequence is DRFSPFGRFKLSHSDSNEEKALNLSSAVWFAWGVLLNSGIGEGTPRSFSARVLGMVW. A helical transmembrane segment spans residues 664–684; that stretch reads AGFAMIIVASYTANLAAFLVL. Residues 685–843 are Extracellular-facing; it reads ERPKTKLSGI…KTPNTLGLKN (159 aa). A glycan (N-linked (GlcNAc...) asparagine) is linked at Asn-705. 2 residues coordinate glycine: Ser-715 and Asp-759. Residues 844-864 traverse the membrane as a helical segment; sequence MAGVFILVGVGIAGGVGLIII. At 865-1004 the chain is on the cytoplasmic side; sequence EVIYKKHQVK…YTSDVSHLVV (140 aa). Residues 980-1004 form a disordered region; that stretch reads TRPQQNILPPRYSPGYTSDVSHLVV. Positions 994 to 1004 are enriched in polar residues; the sequence is GYTSDVSHLVV.

Belongs to the glutamate-gated ion channel (TC 1.A.10.1) family. Forms a heteromeric NMDA channel with Nmdar2.

It localises to the cell membrane. It is found in the postsynaptic cell membrane. The protein localises to the postsynaptic density. NMDA receptor subtype of glutamate-gated ion channels with high calcium permeability and voltage-dependent sensitivity to magnesium. Mediated by glycine. This protein plays a key role in synaptic plasticity, synaptogenesis, excitotoxicity, memory acquisition and learning. It mediates neuronal functions in glutamate neurotransmission. Is involved in the cell surface targeting of NMDA receptors. Plays a role in associative learning and in long-term memory consolidation. This Drosophila pseudoobscura pseudoobscura (Fruit fly) protein is Glutamate [NMDA] receptor subunit 1.